The primary structure comprises 275 residues: Melanoma-associated antigen B5 (275 aa).

Residues 1 to 33 are disordered; that stretch reads MTSAGVFNAGSDERANSRDEEYPCSSEVSPSTE. Residues 11-21 are compositionally biased toward basic and acidic residues; it reads SDERANSRDEE. Residues 23–33 show a composition bias toward low complexity; that stretch reads PCSSEVSPSTE. The 200-residue stretch at 40–239 folds into the MAGE domain; that stretch reads INIKVGLLEQ…GAFSSQYEEA (200 aa).

As to expression, expressed in testis. Not expressed in other normal tissues, but is expressed in tumors of different histological origins.

The chain is Melanoma-associated antigen B5 (MAGEB5) from Homo sapiens (Human).